Consider the following 183-residue polypeptide: Photosystem I assembly protein Ycf3 (183 aa).

3 TPR repeats span residues 35–68 (AFIY…EIDS), 72–105 (SYIL…NSFL), and 120–153 (GEQA…SPDN).

This sequence belongs to the Ycf3 family.

The protein resides in the plastid. The protein localises to the chloroplast thylakoid membrane. Functionally, essential for the assembly of the photosystem I (PSI) complex. May act as a chaperone-like factor to guide the assembly of the PSI subunits. This chain is Photosystem I assembly protein Ycf3, found in Adiantum capillus-veneris (Maidenhair fern).